We begin with the raw amino-acid sequence, 352 residues long: tRNA-specific 2-thiouridylase MnmA (352 aa).

ATP-binding positions include 7-14 (GLSGGVDS) and L33. The Nucleophile role is filled by C94. C94 and C193 are oxidised to a cystine. G119 contacts ATP. The tract at residues 143 to 145 (KDQ) is interaction with tRNA. C193 functions as the Cysteine persulfide intermediate in the catalytic mechanism. Positions 298-299 (RY) are interaction with tRNA.

The protein belongs to the MnmA/TRMU family.

The protein localises to the cytoplasm. The catalysed reaction is S-sulfanyl-L-cysteinyl-[protein] + uridine(34) in tRNA + AH2 + ATP = 2-thiouridine(34) in tRNA + L-cysteinyl-[protein] + A + AMP + diphosphate + H(+). Its function is as follows. Catalyzes the 2-thiolation of uridine at the wobble position (U34) of tRNA, leading to the formation of s(2)U34. This is tRNA-specific 2-thiouridylase MnmA from Trichormus variabilis (strain ATCC 29413 / PCC 7937) (Anabaena variabilis).